A 489-amino-acid chain; its full sequence is Transmembrane protein 161A (489 aa).

A signal peptide spans 1–23 (MAVMGIQMVVTLLVASLMQRVSP). Residues 24-98 (HYSFGRWLLC…INTMDALVLR (75 aa)) are Extracellular-facing. Asparagine 34 is a glycosylation site (N-linked (GlcNAc...) asparagine). A helical membrane pass occupies residues 99 to 119 (YFLEYQWFIDFALYSTIIYLF). Topologically, residues 120-134 (TEAYYCVVDAQNEIN) are cytoplasmic. A helical membrane pass occupies residues 135 to 155 (IGVLWCLMSIIFSIKVLFTVM). At 156–166 (KHYFRSEEGGE) the chain is on the extracellular side. Residues 167 to 187 (RSVCMTFAFFFLLIAMIVTIV) form a helical membrane-spanning segment. The Cytoplasmic portion of the chain corresponds to 188-224 (RDEYLEFGLEPGLASVCHNLENFLAQQGWQWSMPFVK). Residues 225 to 245 (LAFKIALVALCAFLGGCLTFP) form a helical membrane-spanning segment. Residues 246 to 264 (GLRLAQTHLDALKMAADRP) are Extracellular-facing. Residues 265-285 (MLQLLLHMSFLPPVIVVVLWI) form a helical membrane-spanning segment. The Cytoplasmic segment spans residues 286–304 (RPITRDFLLNAPMGKESVE). A helical transmembrane segment spans residues 305–325 (LMSNSAYNTFRLWIIVLLCLL). Residues 326-370 (RFCLTRFHLQAYLCLADRWVEQMKREAGRISMLEIQRKISRIFCY) are Extracellular-facing. A helical transmembrane segment spans residues 371–391 (LTVVALQYLAPVILTFHCVFM). The Cytoplasmic portion of the chain corresponds to 392 to 459 (LKSLGDYSWG…GLFTPLFFRG (68 aa)). The interval 413 to 432 (VDSSPVQSHSPTSEEEEDTE) is disordered. A helical membrane pass occupies residues 460 to 480 (IFSFLTWWVSVCQIITSLFGL). Topologically, residues 481–489 (YFHQYLGAS) are extracellular.

The protein belongs to the TMEM161 family.

The protein localises to the membrane. Its function is as follows. May play a role in protection against oxidative stress. In Xenopus laevis (African clawed frog), this protein is Transmembrane protein 161A (tmem161a).